The primary structure comprises 275 residues: Urease accessory protein UreD (275 aa).

The protein belongs to the UreD family. UreD, UreF and UreG form a complex that acts as a GTP-hydrolysis-dependent molecular chaperone, activating the urease apoprotein by helping to assemble the nickel containing metallocenter of UreC. The UreE protein probably delivers the nickel.

The protein resides in the cytoplasm. Required for maturation of urease via the functional incorporation of the urease nickel metallocenter. The polypeptide is Urease accessory protein UreD (Cereibacter sphaeroides (strain ATCC 17025 / ATH 2.4.3) (Rhodobacter sphaeroides)).